The sequence spans 637 residues: Multicopper oxidase LPR1 homolog 5 (637 aa).

The signal sequence occupies residues 1-21 (MSPRIQQLAAVLLAAVVVVAA). Asparagine 100 carries an N-linked (GlcNAc...) asparagine glycan. Residues histidine 209 and histidine 211 each coordinate Cu cation. N-linked (GlcNAc...) asparagine glycosylation occurs at asparagine 234. Cu cation contacts are provided by histidine 257 and histidine 259. Residues asparagine 308, asparagine 349, asparagine 357, asparagine 425, asparagine 482, and asparagine 516 are each glycosylated (N-linked (GlcNAc...) asparagine). The region spanning 334 to 406 (PYLSVQRRRY…IVDFSRLPAA (73 aa)) is the Plastocyanin-like domain. Cu cation contacts are provided by histidine 522, histidine 525, and histidine 527. The N-linked (GlcNAc...) asparagine glycan is linked to asparagine 553. Cu cation contacts are provided by histidine 618, cysteine 619, histidine 620, histidine 624, and methionine 629.

The protein belongs to the multicopper oxidase family. Cu cation serves as cofactor. As to expression, highly expressed in roots and basal stems.

The protein resides in the endoplasmic reticulum membrane. Functionally, multicopper oxidase that may play a role in the maintenance of inorganic phosphate homeostasis. The sequence is that of Multicopper oxidase LPR1 homolog 5 from Oryza sativa subsp. japonica (Rice).